Consider the following 306-residue polypeptide: D-aminoacyl-tRNA deacylase (306 aa).

The protein belongs to the DtdA deacylase family. As to quaternary structure, monomer. The cofactor is Zn(2+).

The catalysed reaction is a D-aminoacyl-tRNA + H2O = a tRNA + a D-alpha-amino acid + H(+). It catalyses the reaction glycyl-tRNA(Ala) + H2O = tRNA(Ala) + glycine + H(+). D-aminoacyl-tRNA deacylase with broad substrate specificity. By recycling D-aminoacyl-tRNA to D-amino acids and free tRNA molecules, this enzyme counteracts the toxicity associated with the formation of D-aminoacyl-tRNA entities in vivo. The chain is D-aminoacyl-tRNA deacylase from Methanosarcina barkeri (strain Fusaro / DSM 804).